The primary structure comprises 369 residues: Phospho-N-acetylmuramoyl-pentapeptide-transferase (369 aa).

Helical transmembrane passes span 2–22, 54–74, 80–100, 113–133, 158–178, 195–215, 241–261, 268–288, 293–313, and 347–367; these read IAIL…TPFF, GLVI…FLGL, GLLV…DDIL, FYKV…TFLV, ALFS…LLWI, LDGL…VIGF, PLDM…FLWW, IMMG…LSIL, LLFL…ILQI, and FWII…ADWL.

It belongs to the glycosyltransferase 4 family. MraY subfamily. Requires Mg(2+) as cofactor.

It localises to the cell membrane. The catalysed reaction is UDP-N-acetyl-alpha-D-muramoyl-L-alanyl-gamma-D-glutamyl-meso-2,6-diaminopimeloyl-D-alanyl-D-alanine + di-trans,octa-cis-undecaprenyl phosphate = di-trans,octa-cis-undecaprenyl diphospho-N-acetyl-alpha-D-muramoyl-L-alanyl-D-glutamyl-meso-2,6-diaminopimeloyl-D-alanyl-D-alanine + UMP. The protein operates within cell wall biogenesis; peptidoglycan biosynthesis. Its function is as follows. Catalyzes the initial step of the lipid cycle reactions in the biosynthesis of the cell wall peptidoglycan: transfers peptidoglycan precursor phospho-MurNAc-pentapeptide from UDP-MurNAc-pentapeptide onto the lipid carrier undecaprenyl phosphate, yielding undecaprenyl-pyrophosphoryl-MurNAc-pentapeptide, known as lipid I. The sequence is that of Phospho-N-acetylmuramoyl-pentapeptide-transferase from Tropheryma whipplei (strain Twist) (Whipple's bacillus).